A 104-amino-acid chain; its full sequence is UPF0213 protein plu4503 (104 aa).

One can recognise a GIY-YIG domain in the interval 4 to 79; that stretch reads NQWVLYLLKT…KQLSKQQKER (76 aa).

The protein belongs to the UPF0213 family.

This chain is UPF0213 protein plu4503, found in Photorhabdus laumondii subsp. laumondii (strain DSM 15139 / CIP 105565 / TT01) (Photorhabdus luminescens subsp. laumondii).